A 944-amino-acid polypeptide reads, in one-letter code: Protein translocase subunit SecA (944 aa).

Residues Q90, G108–T112, and D509 contribute to the ATP site. Residues V533–S565 form a disordered region.

The protein belongs to the SecA family. As to quaternary structure, monomer and homodimer. Part of the essential Sec protein translocation apparatus which comprises SecA, SecYEG and auxiliary proteins SecDF. Other proteins may also be involved.

Its subcellular location is the cell inner membrane. The protein resides in the cellular thylakoid membrane. It is found in the cytoplasm. It catalyses the reaction ATP + H2O + cellular proteinSide 1 = ADP + phosphate + cellular proteinSide 2.. Part of the Sec protein translocase complex. Interacts with the SecYEG preprotein conducting channel. Has a central role in coupling the hydrolysis of ATP to the transfer of proteins into and across the cell membrane, serving as an ATP-driven molecular motor driving the stepwise translocation of polypeptide chains across the membrane. Its function is as follows. Probably participates in protein translocation into and across both the cytoplasmic and thylakoid membranes in cyanobacterial cells. This chain is Protein translocase subunit SecA, found in Prochlorococcus marinus (strain NATL1A).